A 367-amino-acid chain; its full sequence is Apolipoprotein A-V (367 aa).

Positions 1-20 (MVAVLTWALALLSAFATVQT) are cleaved as a signal peptide. Ser-56 carries the phosphoserine modification. Residues 71–90 (LGPLSGQGREPPGLPHDPEG) form a disordered region.

This sequence belongs to the apolipoprotein A1/A4/E family. In terms of assembly, interacts with GPIHBP1. Interacts with SORL1; this interaction leads to APOA5 internalization and sorting either to lysosomes and degradation, or to the trans-Golgi network. In terms of processing, phosphorylated by FAM20C in the extracellular medium.

The protein resides in the secreted. Its subcellular location is the early endosome. The protein localises to the late endosome. It is found in the golgi apparatus. It localises to the trans-Golgi network. Functionally, minor apolipoprotein mainly associated with HDL and to a lesser extent with VLDL. May also be associated with chylomicrons. Important determinant of plasma triglyceride (TG) levels by both being a potent stimulator of apo-CII lipoprotein lipase (LPL) TG hydrolysis and an inhibitor of the hepatic VLDL-TG production rate (without affecting the VLDL-apoB production rate). Activates poorly lecithin:cholesterol acyltransferase (LCAT) and does not enhance efflux of cholesterol from macrophages. Binds heparin. This chain is Apolipoprotein A-V (APOA5), found in Leptonychotes weddellii (Weddell seal).